Reading from the N-terminus, the 859-residue chain is Protein EFR3 homolog (859 aa).

A compositionally biased stretch (polar residues) spans 696-714; sequence RKNDGSGDQWQNDTPNFDS. A disordered region spans residues 696 to 728; sequence RKNDGSGDQWQNDTPNFDSTDGRESPSGYKTVG.

This sequence belongs to the EFR3 family.

The sequence is that of Protein EFR3 homolog from Caenorhabditis elegans.